Reading from the N-terminus, the 188-residue chain is Pyridoxal 5'-phosphate synthase subunit PdxT (188 aa).

L-glutamine is bound at residue 47–49 (GES). Residue C79 is the Nucleophile of the active site. Residues R105 and 134-135 (IR) contribute to the L-glutamine site. Residues H170 and E172 each act as charge relay system in the active site.

The protein belongs to the glutaminase PdxT/SNO family. In terms of assembly, in the presence of PdxS, forms a dodecamer of heterodimers. Only shows activity in the heterodimer.

The catalysed reaction is aldehydo-D-ribose 5-phosphate + D-glyceraldehyde 3-phosphate + L-glutamine = pyridoxal 5'-phosphate + L-glutamate + phosphate + 3 H2O + H(+). The enzyme catalyses L-glutamine + H2O = L-glutamate + NH4(+). It participates in cofactor biosynthesis; pyridoxal 5'-phosphate biosynthesis. Functionally, catalyzes the hydrolysis of glutamine to glutamate and ammonia as part of the biosynthesis of pyridoxal 5'-phosphate. The resulting ammonia molecule is channeled to the active site of PdxS. This Listeria welshimeri serovar 6b (strain ATCC 35897 / DSM 20650 / CCUG 15529 / CIP 8149 / NCTC 11857 / SLCC 5334 / V8) protein is Pyridoxal 5'-phosphate synthase subunit PdxT.